A 214-amino-acid polypeptide reads, in one-letter code: Large ribosomal subunit protein uL3 (214 aa).

N5-methylglutamine is present on Gln155.

This sequence belongs to the universal ribosomal protein uL3 family. As to quaternary structure, part of the 50S ribosomal subunit. Forms a cluster with proteins L14 and L19. Methylated by PrmB.

In terms of biological role, one of the primary rRNA binding proteins, it binds directly near the 3'-end of the 23S rRNA, where it nucleates assembly of the 50S subunit. This is Large ribosomal subunit protein uL3 from Acinetobacter baumannii (strain ACICU).